We begin with the raw amino-acid sequence, 332 residues long: tRNA-dihydrouridine(20/20a) synthase (332 aa).

FMN contacts are provided by residues 19-21 (PML) and Q71. C101 (proton donor) is an active-site residue. FMN contacts are provided by residues K140, H173, 213-215 (NGG), and 235-236 (GR).

It belongs to the Dus family. DusA subfamily. It depends on FMN as a cofactor.

It carries out the reaction 5,6-dihydrouridine(20) in tRNA + NADP(+) = uridine(20) in tRNA + NADPH + H(+). It catalyses the reaction 5,6-dihydrouridine(20) in tRNA + NAD(+) = uridine(20) in tRNA + NADH + H(+). The enzyme catalyses 5,6-dihydrouridine(20a) in tRNA + NADP(+) = uridine(20a) in tRNA + NADPH + H(+). The catalysed reaction is 5,6-dihydrouridine(20a) in tRNA + NAD(+) = uridine(20a) in tRNA + NADH + H(+). Functionally, catalyzes the synthesis of 5,6-dihydrouridine (D), a modified base found in the D-loop of most tRNAs, via the reduction of the C5-C6 double bond in target uridines. Specifically modifies U20 and U20a in tRNAs. The sequence is that of tRNA-dihydrouridine(20/20a) synthase from Salmonella typhimurium (strain LT2 / SGSC1412 / ATCC 700720).